A 137-amino-acid polypeptide reads, in one-letter code: Putative pre-16S rRNA nuclease (137 aa).

This sequence belongs to the YqgF nuclease family.

It localises to the cytoplasm. In terms of biological role, could be a nuclease involved in processing of the 5'-end of pre-16S rRNA. This chain is Putative pre-16S rRNA nuclease, found in Oceanobacillus iheyensis (strain DSM 14371 / CIP 107618 / JCM 11309 / KCTC 3954 / HTE831).